Here is a 704-residue protein sequence, read N- to C-terminus: Elongation factor G 1 (704 aa).

A tr-type G domain is found at 8–285 (EKIRNIGISA…AVCAFLPNPK (278 aa)). Residues 17-24 (AHIDSGKT), 84-88 (DTPGH), and 138-141 (NKMD) each bind GTP.

This sequence belongs to the TRAFAC class translation factor GTPase superfamily. Classic translation factor GTPase family. EF-G/EF-2 subfamily.

It is found in the cytoplasm. In terms of biological role, catalyzes the GTP-dependent ribosomal translocation step during translation elongation. During this step, the ribosome changes from the pre-translocational (PRE) to the post-translocational (POST) state as the newly formed A-site-bound peptidyl-tRNA and P-site-bound deacylated tRNA move to the P and E sites, respectively. Catalyzes the coordinated movement of the two tRNA molecules, the mRNA and conformational changes in the ribosome. This Myxococcus xanthus (strain DK1622) protein is Elongation factor G 1.